We begin with the raw amino-acid sequence, 1271 residues long: ATP-dependent helicase/nuclease subunit A (1271 aa).

The region spanning 3–476 is the UvrD-like helicase ATP-binding domain; the sequence is TKWTEEQELA…IMLYKNFRSR (474 aa). 24–31 provides a ligand contact to ATP; the sequence is AAAGSGKT. One can recognise a UvrD-like helicase C-terminal domain in the interval 528 to 824; sequence IENLKVAGDI…RIMSIHKSKG (297 aa).

It belongs to the helicase family. AddA subfamily. As to quaternary structure, heterodimer of AddA and AddB/RexB. Mg(2+) is required as a cofactor.

The catalysed reaction is Couples ATP hydrolysis with the unwinding of duplex DNA by translocating in the 3'-5' direction.. It catalyses the reaction ATP + H2O = ADP + phosphate + H(+). Its function is as follows. The heterodimer acts as both an ATP-dependent DNA helicase and an ATP-dependent, dual-direction single-stranded exonuclease. Recognizes the chi site generating a DNA molecule suitable for the initiation of homologous recombination. The AddA nuclease domain is required for chi fragment generation; this subunit has the helicase and 3' -&gt; 5' nuclease activities. This is ATP-dependent helicase/nuclease subunit A from Clostridium perfringens (strain ATCC 13124 / DSM 756 / JCM 1290 / NCIMB 6125 / NCTC 8237 / Type A).